The chain runs to 179 residues: uncharacterized protein (179 aa).

The segment at residues 1–27 is a signal peptide (or 24); the sequence is MKTISKQLSAVIFPFIFSACVSQSASS.

This is an uncharacterized protein from Haemophilus influenzae (strain ATCC 51907 / DSM 11121 / KW20 / Rd).